The following is a 407-amino-acid chain: Frizzled/smoothened-like sans CRD protein J (407 aa).

A signal peptide spans 1–23 (MKFLFSVILVIISFLGISKIVNG). Over 24–89 (QIACPSPFLY…WNSFNKLVKQ (66 aa)) the chain is Extracellular. Asn37 carries an N-linked (GlcNAc...) asparagine glycan. A helical membrane pass occupies residues 90 to 110 (MGAVAFTCSAIIMIIYGPLMN). Topologically, residues 111–120 (RSFFKFDRHT) are cytoplasmic. The helical transmembrane segment at 121–141 (ITVFCFALSTFFIGVSDLMFA) threads the bilayer. Residues 142-169 (TNDVDMVCPESHRYARQTDKTCATNGVL) are Extracellular-facing. The chain crosses the membrane as a helical span at residues 170–190 (FQFGWLGSVMWFAFLSIDGFF). Over 191–199 (RASGKKMNK) the chain is Cytoplasmic. Residues 200 to 220 (IAFAIVLASIWILNIVLSFAP) form a helical membrane-spanning segment. The Extracellular portion of the chain corresponds to 221 to 246 (MGGDQYGAYFVGQVNCWILVKNWQYA). A helical membrane pass occupies residues 247-267 (FFWAELIVSLAIGFVGICLTI). The Cytoplasmic portion of the chain corresponds to 268–285 (YSLIRKTSDGNTLKHVTP). Residues 286–306 (LILVFLLFCQYLYMIIFYGII) traverse the membrane as a helical segment. Topologically, residues 307-354 (NEKKDHYQNILAEQVGCIFNNALAKMKVPGIVYAGECTFNETITFSSQ) are extracellular. Residue Asn346 is glycosylated (N-linked (GlcNAc...) asparagine). Residues 355–375 (YAFLFFVRLLGIEIFAFYLFS) traverse the membrane as a helical segment. At 376–407 (KETLLLIKSSYIATMFGLGDKDAYDVELEETD) the chain is on the cytoplasmic side.

The protein belongs to the G-protein coupled receptor Fz/Smo family.

It is found in the membrane. This chain is Frizzled/smoothened-like sans CRD protein J (fscJ), found in Dictyostelium discoideum (Social amoeba).